Reading from the N-terminus, the 382-residue chain is Beta-1,4-galactosyltransferase 6 (382 aa).

The Cytoplasmic segment spans residues 1–15 (MSALKRMMRVSNRSL). The helical; Signal-anchor for type II membrane protein transmembrane segment at 16-35 (IAFIFFFSLSTSCLYFIYVA) threads the bilayer. At 36 to 382 (PGIANTYLFM…MPELAPIEDY (347 aa)) the chain is on the lumenal side. Asn71, Asn75, Asn83, Asn84, Asn99, and Asn122 each carry an N-linked (GlcNAc...) asparagine glycan. An intrachain disulfide couples Cys108 to Cys152. UDP-alpha-D-galactose is bound by residues 163–167 (PFRNR), 202–204 (FNR), 229–230 (VD), Tyr258, and Trp290. Cys223 and Cys242 are joined by a disulfide. Asp230 is a Mn(2+) binding site. 292 to 295 (GEDD) lines the N-acetyl-D-glucosamine pocket. N-linked (GlcNAc...) asparagine glycosylation is present at Asn307. His323 contacts Mn(2+). Residue 323–324 (HH) coordinates UDP-alpha-D-galactose. Residue Arg334 participates in N-acetyl-D-glucosamine binding. An N-linked (GlcNAc...) asparagine glycan is attached at Asn367.

The protein belongs to the glycosyltransferase 7 family. Mn(2+) is required as a cofactor. Mg(2+) serves as cofactor. The cofactor is Ca(2+). Brain and kidney.

Its subcellular location is the golgi apparatus. It localises to the golgi stack membrane. The enzyme catalyses a beta-D-glucosyl-(1&lt;-&gt;1')-N-acylsphing-4-enine + UDP-alpha-D-galactose = a beta-D-Gal-(1-&gt;4)-beta-D-Glc-(1&lt;-&gt;1)-Cer(d18:1(4E)) + UDP + H(+). It participates in protein modification; protein glycosylation. It functions in the pathway sphingolipid metabolism. Its activity is regulated as follows. Inhibited by EDTA. In terms of biological role, catalyzes the synthesis of lactosylceramide (LacCer) via the transfer of galactose from UDP-galactose to glucosylceramide (GlcCer). LacCer is the starting point in the biosynthesis of all gangliosides (membrane-bound glycosphingolipids) which play pivotal roles in the CNS including neuronal maturation and axonal and myelin formation. The protein is Beta-1,4-galactosyltransferase 6 of Mus musculus (Mouse).